We begin with the raw amino-acid sequence, 178 residues long: Crossover junction endodeoxyribonuclease RuvC (178 aa).

Active-site residues include D11, E71, and D143. Mg(2+) contacts are provided by D11, E71, and D143.

This sequence belongs to the RuvC family. Homodimer which binds Holliday junction (HJ) DNA. The HJ becomes 2-fold symmetrical on binding to RuvC with unstacked arms; it has a different conformation from HJ DNA in complex with RuvA. In the full resolvosome a probable DNA-RuvA(4)-RuvB(12)-RuvC(2) complex forms which resolves the HJ. The cofactor is Mg(2+).

It is found in the cytoplasm. It catalyses the reaction Endonucleolytic cleavage at a junction such as a reciprocal single-stranded crossover between two homologous DNA duplexes (Holliday junction).. Its function is as follows. The RuvA-RuvB-RuvC complex processes Holliday junction (HJ) DNA during genetic recombination and DNA repair. Endonuclease that resolves HJ intermediates. Cleaves cruciform DNA by making single-stranded nicks across the HJ at symmetrical positions within the homologous arms, yielding a 5'-phosphate and a 3'-hydroxyl group; requires a central core of homology in the junction. The consensus cleavage sequence is 5'-(A/T)TT(C/G)-3'. Cleavage occurs on the 3'-side of the TT dinucleotide at the point of strand exchange. HJ branch migration catalyzed by RuvA-RuvB allows RuvC to scan DNA until it finds its consensus sequence, where it cleaves and resolves the cruciform DNA. This chain is Crossover junction endodeoxyribonuclease RuvC, found in Neisseria meningitidis serogroup A / serotype 4A (strain DSM 15465 / Z2491).